The chain runs to 115 residues: Beta-2-microglobulin (115 aa).

The signal sequence occupies residues 1–18; that stretch reads MGLLICSLLLGLLCCSMA. The 92-residue stretch at 23–114 folds into the Ig-like C1-type domain; sequence PKVEVYTREP…KSKDHFLMIG (92 aa).

The protein belongs to the beta-2-microglobulin family. As to quaternary structure, heterodimer of an alpha chain and a beta chain. Beta-2-microglobulin is the beta-chain of major histocompatibility complex class I molecules.

The protein localises to the secreted. In terms of biological role, component of the class I major histocompatibility complex (MHC). Involved in the presentation of peptide antigens to the immune system. This Paralichthys olivaceus (Bastard halibut) protein is Beta-2-microglobulin (b2m).